The following is a 145-amino-acid chain: Transmembrane protein 170A (145 aa).

Topologically, residues 1-50 are lumenal; sequence MIEALIVGEMQDVQIGFVKQILSLNLVPRSNNTTCGNNTSLCDFSEMWYG. Asn31 and Asn37 each carry an N-linked (GlcNAc...) asparagine glycan. Residues 51–71 form a helical membrane-spanning segment; that stretch reads VFLWAVVSSLIFHLPAALLAL. Over 72–81 the chain is Cytoplasmic; the sequence is ATLRRHKVAR. A helical membrane pass occupies residues 82–102; it reads FFPLGILLMGIIGPLFGGVLT. Topologically, residues 103 to 117 are lumenal; sequence SAAIAGVYKAAGKSM. Residues 118–138 traverse the membrane as a helical segment; that stretch reads FSLEALVFGVGQSLFIFIISF. The Cytoplasmic portion of the chain corresponds to 139–145; the sequence is LRILATL.

It belongs to the TMEM170 family.

It is found in the endoplasmic reticulum membrane. The protein resides in the nucleus envelope. Functionally, may regulate membrane morphogenesis in the endoplasmic reticulum (ER) by promoting ER sheet formation at the expense of ER tubules. This Danio rerio (Zebrafish) protein is Transmembrane protein 170A (tmem170a).